Here is a 450-residue protein sequence, read N- to C-terminus: Exodeoxyribonuclease 7 large subunit (450 aa).

The protein belongs to the XseA family. In terms of assembly, heterooligomer composed of large and small subunits.

Its subcellular location is the cytoplasm. The enzyme catalyses Exonucleolytic cleavage in either 5'- to 3'- or 3'- to 5'-direction to yield nucleoside 5'-phosphates.. Its function is as follows. Bidirectionally degrades single-stranded DNA into large acid-insoluble oligonucleotides, which are then degraded further into small acid-soluble oligonucleotides. The chain is Exodeoxyribonuclease 7 large subunit from Listeria welshimeri serovar 6b (strain ATCC 35897 / DSM 20650 / CCUG 15529 / CIP 8149 / NCTC 11857 / SLCC 5334 / V8).